The primary structure comprises 422 residues: Phagosome assembly factor 1 (422 aa).

It belongs to the PHAF1 family. In terms of assembly, interacts with BCAS3; the interaction is requrired for the association with the phagophore.

The protein localises to the cytoplasm. It is found in the preautophagosomal structure. Plays a regulatory role in autophagic activity. In complex with BCAS3, associates with the autophagosome formation site during both non-selective and selective autophagy. This chain is Phagosome assembly factor 1, found in Homo sapiens (Human).